The chain runs to 355 residues: DNA-directed RNA polymerase subunit alpha (355 aa).

The interval 1 to 233 is alpha N-terminal domain (alpha-NTD); sequence MVREKVRVST…DLFIPFLHKE (233 aa). Residues 268 to 355 form an alpha C-terminal domain (alpha-CTD) region; it reads KKKIALKSIF…EIYCYSIFFH (88 aa).

Belongs to the RNA polymerase alpha chain family. As to quaternary structure, in plastids the minimal PEP RNA polymerase catalytic core is composed of four subunits: alpha, beta, beta', and beta''. When a (nuclear-encoded) sigma factor is associated with the core the holoenzyme is formed, which can initiate transcription.

It is found in the plastid. It localises to the chloroplast. The enzyme catalyses RNA(n) + a ribonucleoside 5'-triphosphate = RNA(n+1) + diphosphate. DNA-dependent RNA polymerase catalyzes the transcription of DNA into RNA using the four ribonucleoside triphosphates as substrates. The chain is DNA-directed RNA polymerase subunit alpha from Jasminum nudiflorum (Winter jasmine).